Here is a 326-residue protein sequence, read N- to C-terminus: Beta-ketoacyl-[acyl-carrier-protein] synthase III (326 aa).

Residues C115 and H253 contribute to the active site. The ACP-binding stretch occupies residues 254 to 258 (QANKR). N283 is a catalytic residue.

It belongs to the thiolase-like superfamily. FabH family. In terms of assembly, homodimer.

It is found in the cytoplasm. The catalysed reaction is malonyl-[ACP] + acetyl-CoA + H(+) = 3-oxobutanoyl-[ACP] + CO2 + CoA. The protein operates within lipid metabolism; fatty acid biosynthesis. Its function is as follows. Catalyzes the condensation reaction of fatty acid synthesis by the addition to an acyl acceptor of two carbons from malonyl-ACP. Catalyzes the first condensation reaction which initiates fatty acid synthesis and may therefore play a role in governing the total rate of fatty acid production. Possesses both acetoacetyl-ACP synthase and acetyl transacylase activities. Its substrate specificity determines the biosynthesis of branched-chain and/or straight-chain of fatty acids. This is Beta-ketoacyl-[acyl-carrier-protein] synthase III from Bradyrhizobium diazoefficiens (strain JCM 10833 / BCRC 13528 / IAM 13628 / NBRC 14792 / USDA 110).